The following is a 463-amino-acid chain: Quinolone resistance protein NorB (463 aa).

Helical transmembrane passes span 17-37 (IGIV…VNVV), 53-73 (IAVS…GGLA), 86-106 (IILN…LLLI), 107-127 (IGRL…LSII), 142-162 (YWSI…GAVA), 165-185 (LGWR…LFLI), 201-221 (FDIK…ILIT), 230-250 (SLLF…FIVL), 273-293 (TASN…NTFV), 299-319 (YSSL…LIMI), 334-354 (PMLI…LTFL), 357-377 (ILYV…LGIY), 403-423 (MASA…YAIV), and 435-455 (IALW…LLLV).

The protein belongs to the major facilitator superfamily. TCR/Tet family.

It is found in the cell membrane. Multidrug efflux pump that acts independently of NorA and is one of the factors that confers resistance against diverse quinolones and chemical compounds. The protein is Quinolone resistance protein NorB (norB) of Staphylococcus aureus (strain MSSA476).